A 310-amino-acid chain; its full sequence is UDP-N-acetylenolpyruvoylglucosamine reductase (310 aa).

Residues 34-211 form the FAD-binding PCMH-type domain; it reads TGGPAQCVYV…REDMGKIAQE (178 aa). The active site involves Arg-177. Residue Ser-225 is the Proton donor of the active site. Residue Glu-295 is part of the active site.

It belongs to the MurB family. FAD is required as a cofactor.

The protein resides in the cytoplasm. The enzyme catalyses UDP-N-acetyl-alpha-D-muramate + NADP(+) = UDP-N-acetyl-3-O-(1-carboxyvinyl)-alpha-D-glucosamine + NADPH + H(+). Its pathway is cell wall biogenesis; peptidoglycan biosynthesis. Functionally, cell wall formation. The protein is UDP-N-acetylenolpyruvoylglucosamine reductase of Beijerinckia indica subsp. indica (strain ATCC 9039 / DSM 1715 / NCIMB 8712).